A 156-amino-acid polypeptide reads, in one-letter code: 6,7-dimethyl-8-ribityllumazine synthase (156 aa).

Residues Phe-22, 57-59 (AYE), and 81-83 (TVI) contribute to the 5-amino-6-(D-ribitylamino)uracil site. 86 to 87 (GT) is a (2S)-2-hydroxy-3-oxobutyl phosphate binding site. His-89 acts as the Proton donor in catalysis. A 5-amino-6-(D-ribitylamino)uracil-binding site is contributed by Phe-114. Position 128 (Arg-128) interacts with (2S)-2-hydroxy-3-oxobutyl phosphate.

The protein belongs to the DMRL synthase family. In terms of assembly, forms an icosahedral capsid composed of 60 subunits, arranged as a dodecamer of pentamers.

It carries out the reaction (2S)-2-hydroxy-3-oxobutyl phosphate + 5-amino-6-(D-ribitylamino)uracil = 6,7-dimethyl-8-(1-D-ribityl)lumazine + phosphate + 2 H2O + H(+). The protein operates within cofactor biosynthesis; riboflavin biosynthesis; riboflavin from 2-hydroxy-3-oxobutyl phosphate and 5-amino-6-(D-ribitylamino)uracil: step 1/2. Catalyzes the formation of 6,7-dimethyl-8-ribityllumazine by condensation of 5-amino-6-(D-ribitylamino)uracil with 3,4-dihydroxy-2-butanone 4-phosphate. This is the penultimate step in the biosynthesis of riboflavin. The protein is 6,7-dimethyl-8-ribityllumazine synthase of Salmonella heidelberg (strain SL476).